The following is a 163-amino-acid chain: MMIRIGFGYDVHPLVEGRKLIIGGVEIPFTKGLLGHSDADVLYHAIADAFLGSLALGDIGQLFPDNDERYRGIDSGLLLQEVYRRVRERGYCLNNLDAVIVAQKPKLLPFIQKMRENLAVLLNTAIENISVKATTTEGLGFAGREEGIAAYAVITVKEVLENG.

Aspartate 10 and histidine 12 together coordinate a divalent metal cation. Residues aspartate 10–histidine 12 and histidine 36–serine 37 contribute to the 4-CDP-2-C-methyl-D-erythritol 2-phosphate site. An a divalent metal cation-binding site is contributed by histidine 44. Residues aspartate 58 to glycine 60, phenylalanine 63 to aspartate 67, threonine 134 to glutamate 137, phenylalanine 141, and arginine 144 contribute to the 4-CDP-2-C-methyl-D-erythritol 2-phosphate site.

This sequence belongs to the IspF family. As to quaternary structure, homotrimer. A divalent metal cation is required as a cofactor.

It carries out the reaction 4-CDP-2-C-methyl-D-erythritol 2-phosphate = 2-C-methyl-D-erythritol 2,4-cyclic diphosphate + CMP. The protein operates within isoprenoid biosynthesis; isopentenyl diphosphate biosynthesis via DXP pathway; isopentenyl diphosphate from 1-deoxy-D-xylulose 5-phosphate: step 4/6. Functionally, involved in the biosynthesis of isopentenyl diphosphate (IPP) and dimethylallyl diphosphate (DMAPP), two major building blocks of isoprenoid compounds. Catalyzes the conversion of 4-diphosphocytidyl-2-C-methyl-D-erythritol 2-phosphate (CDP-ME2P) to 2-C-methyl-D-erythritol 2,4-cyclodiphosphate (ME-CPP) with a corresponding release of cytidine 5-monophosphate (CMP). The polypeptide is 2-C-methyl-D-erythritol 2,4-cyclodiphosphate synthase (Carboxydothermus hydrogenoformans (strain ATCC BAA-161 / DSM 6008 / Z-2901)).